Consider the following 406-residue polypeptide: Tyrosine--tRNA ligase (406 aa).

Position 35 (Tyr-35) interacts with L-tyrosine. The 'HIGH' region motif lies at Pro-40–His-49. 2 residues coordinate L-tyrosine: Tyr-168 and Gln-172. The 'KMSKS' region motif lies at Lys-228–Thr-232. Lys-231 serves as a coordination point for ATP. An S4 RNA-binding domain is found at Ser-340–Glu-404.

This sequence belongs to the class-I aminoacyl-tRNA synthetase family. TyrS type 1 subfamily. Homodimer.

It localises to the cytoplasm. It carries out the reaction tRNA(Tyr) + L-tyrosine + ATP = L-tyrosyl-tRNA(Tyr) + AMP + diphosphate + H(+). Its function is as follows. Catalyzes the attachment of tyrosine to tRNA(Tyr) in a two-step reaction: tyrosine is first activated by ATP to form Tyr-AMP and then transferred to the acceptor end of tRNA(Tyr). This chain is Tyrosine--tRNA ligase, found in Clostridium botulinum (strain Alaska E43 / Type E3).